The sequence spans 79 residues: Neurotoxin ShK-like1 (79 aa).

The first 25 residues, 1-25 (MSRKLLAVLMVCTFFLIAASMGTNA), serve as a signal peptide directing secretion. The propeptide occupies 26–35 (LPFHEGIERR). In terms of domain architecture, ShKT spans 39 to 78 (CVDKMPFVCMRKDIPAICKNRNHRSYAFIMDVCRKTCGQC). 3 cysteine pairs are disulfide-bonded: Cys-39–Cys-78, Cys-47–Cys-71, and Cys-56–Cys-75.

Expressed in nematocytes (in planulae and primary polyps). Is localized predominantly in the body column nematocytes and not in the tentacles (in primary polyps).

The protein resides in the nematocyst. The protein localises to the secreted. Its function is as follows. Neurotoxin. In vivo, induces contraction paralysis followed by death (within 2 hours) on zebrafish larvae. Also induces body contraction in Nematostella 11-dpf polyps. The sequence is that of Neurotoxin ShK-like1 from Nematostella vectensis (Starlet sea anemone).